Consider the following 265-residue polypeptide: Enolase-phosphatase E1 (265 aa).

Mg(2+)-binding residues include Asp-18 and Glu-20. Substrate is bound by residues 144 to 145 (SS) and Lys-188. Residue Asp-215 participates in Mg(2+) binding.

Belongs to the HAD-like hydrolase superfamily. MasA/MtnC family. In terms of assembly, monomer. Requires Mg(2+) as cofactor.

It is found in the cytoplasm. The protein resides in the nucleus. The enzyme catalyses 5-methylsulfanyl-2,3-dioxopentyl phosphate + H2O = 1,2-dihydroxy-5-(methylsulfanyl)pent-1-en-3-one + phosphate. It participates in amino-acid biosynthesis; L-methionine biosynthesis via salvage pathway; L-methionine from S-methyl-5-thio-alpha-D-ribose 1-phosphate: step 3/6. Its pathway is amino-acid biosynthesis; L-methionine biosynthesis via salvage pathway; L-methionine from S-methyl-5-thio-alpha-D-ribose 1-phosphate: step 4/6. Its function is as follows. Bifunctional enzyme that catalyzes the enolization of 2,3-diketo-5-methylthiopentyl-1-phosphate (DK-MTP-1-P) into the intermediate 2-hydroxy-3-keto-5-methylthiopentenyl-1-phosphate (HK-MTPenyl-1-P), which is then dephosphorylated to form the acireductone 1,2-dihydroxy-3-keto-5-methylthiopentene (DHK-MTPene). This is Enolase-phosphatase E1 from Candida albicans (strain SC5314 / ATCC MYA-2876) (Yeast).